The primary structure comprises 137 residues: 2-iminobutanoate/2-iminopropanoate deaminase (137 aa).

S2 carries the N-acetylserine modification. An N6-succinyllysine mark is found at K13 and K67. The residue at position 74 (T74) is a Phosphothreonine. S136 is subject to Phosphoserine.

Homotrimer. Interacts with YTHDF2. As to expression, expressed by various malignant neoplasms.

It is found in the cytoplasm. The protein resides in the nucleus. Its subcellular location is the peroxisome. The protein localises to the mitochondrion. It catalyses the reaction 2-iminobutanoate + H2O = 2-oxobutanoate + NH4(+). It carries out the reaction 2-iminopropanoate + H2O = pyruvate + NH4(+). Its function is as follows. Catalyzes the hydrolytic deamination of enamine/imine intermediates that form during the course of normal metabolism. May facilitate the release of ammonia from these potentially toxic reactive metabolites, reducing their impact on cellular components. It may act on enamine/imine intermediates formed by several types of pyridoxal-5'-phosphate-dependent dehydratases including L-threonine dehydratase. Functionally, also promotes endoribonucleolytic cleavage of some transcripts by promoting recruitment of the ribonuclease P/MRP complex. Acts by bridging YTHDF2 and the ribonuclease P/MRP complex. RIDA/HRSP12 binds to N6-methyladenosine (m6A)-containing mRNAs containing a 5'-GGUUC-3' motif: cooperative binding of RIDA/HRSP12 and YTHDF2 to such transcripts lead to recruitment of the ribonuclease P/MRP complex and subsequent endoribonucleolytic cleavage. The sequence is that of 2-iminobutanoate/2-iminopropanoate deaminase from Capra hircus (Goat).